The sequence spans 469 residues: tRNA(Ile)-lysidine synthase (469 aa).

An ATP-binding site is contributed by 26–31; it reads SGGPDS.

Belongs to the tRNA(Ile)-lysidine synthase family.

It localises to the cytoplasm. The enzyme catalyses cytidine(34) in tRNA(Ile2) + L-lysine + ATP = lysidine(34) in tRNA(Ile2) + AMP + diphosphate + H(+). Its function is as follows. Ligates lysine onto the cytidine present at position 34 of the AUA codon-specific tRNA(Ile) that contains the anticodon CAU, in an ATP-dependent manner. Cytidine is converted to lysidine, thus changing the amino acid specificity of the tRNA from methionine to isoleucine. The chain is tRNA(Ile)-lysidine synthase from Clostridium perfringens (strain ATCC 13124 / DSM 756 / JCM 1290 / NCIMB 6125 / NCTC 8237 / Type A).